The primary structure comprises 402 residues: MLYRLKLLLSGQNTKKERVRAKLEIDISIVFVMLGLLIFGWVMVTSASMVVALDDYNNPYFYSIRQGFFAVIAIFLFLLALLVPTKNYEKNYNAFFFIMLIVLVAVLVPGVGKSVNGARRWIPLIIINIQVAELAKLLAIIFFSGYIAENLPKMTNFKEGILTPITLLGCIAVLLLMQPDFGSTVVISICVMGMLFVSGNKVRWYGLLIGAMLIMATMLVIISPYRMHRITGFLHPWENANGSGYQLVQALIGFGRGGWFGDGLGNGVQKQFFLPEAHTDFITSVIAEEIGVIGLMILLMVYLFIVFRAMNIAKMAFELKRYYQAFLSYGISFWIGFQVFVNIGVNTGLLPTKGLTLPLISYGGSSLLIMCFTLGILVRVDFENKLLADTINPKYIYKKVRK.

Over 1–24 the chain is Cytoplasmic; the sequence is MLYRLKLLLSGQNTKKERVRAKLE. Residues 25–45 traverse the membrane as a helical segment; the sequence is IDISIVFVMLGLLIFGWVMVT. At 46 to 63 the chain is on the periplasmic side; the sequence is SASMVVALDDYNNPYFYS. The chain crosses the membrane as a helical span at residues 64–84; that stretch reads IRQGFFAVIAIFLFLLALLVP. Topologically, residues 85–91 are cytoplasmic; that stretch reads TKNYEKN. The chain crosses the membrane as a helical span at residues 92–112; sequence YNAFFFIMLIVLVAVLVPGVG. Over 113–121 the chain is Periplasmic; the sequence is KSVNGARRW. Residues 122–142 traverse the membrane as a helical segment; sequence IPLIIINIQVAELAKLLAIIF. Residues 143-160 lie on the Cytoplasmic side of the membrane; sequence FSGYIAENLPKMTNFKEG. 2 consecutive transmembrane segments (helical) span residues 161-181 and 182-202; these read ILTP…QPDF and GSTV…GNKV. A topological domain (cytoplasmic) is located at residue arginine 203. A helical membrane pass occupies residues 204-224; that stretch reads WYGLLIGAMLIMATMLVIISP. Over 225-284 the chain is Periplasmic; sequence YRMHRITGFLHPWENANGSGYQLVQALIGFGRGGWFGDGLGNGVQKQFFLPEAHTDFITS. The helical transmembrane segment at 285–305 threads the bilayer; sequence VIAEEIGVIGLMILLMVYLFI. Topologically, residues 306–324 are cytoplasmic; it reads VFRAMNIAKMAFELKRYYQ. Residues 325-345 form a helical membrane-spanning segment; it reads AFLSYGISFWIGFQVFVNIGV. Over 346-357 the chain is Periplasmic; sequence NTGLLPTKGLTL. A helical transmembrane segment spans residues 358 to 378; that stretch reads PLISYGGSSLLIMCFTLGILV. The Cytoplasmic segment spans residues 379-402; the sequence is RVDFENKLLADTINPKYIYKKVRK.

This sequence belongs to the SEDS family. FtsW subfamily.

Its subcellular location is the cell inner membrane. It carries out the reaction [GlcNAc-(1-&gt;4)-Mur2Ac(oyl-L-Ala-gamma-D-Glu-L-Lys-D-Ala-D-Ala)](n)-di-trans,octa-cis-undecaprenyl diphosphate + beta-D-GlcNAc-(1-&gt;4)-Mur2Ac(oyl-L-Ala-gamma-D-Glu-L-Lys-D-Ala-D-Ala)-di-trans,octa-cis-undecaprenyl diphosphate = [GlcNAc-(1-&gt;4)-Mur2Ac(oyl-L-Ala-gamma-D-Glu-L-Lys-D-Ala-D-Ala)](n+1)-di-trans,octa-cis-undecaprenyl diphosphate + di-trans,octa-cis-undecaprenyl diphosphate + H(+). It functions in the pathway cell wall biogenesis; peptidoglycan biosynthesis. In terms of biological role, peptidoglycan polymerase that is essential for cell division. The protein is Probable peptidoglycan glycosyltransferase FtsW of Francisella salina.